The chain runs to 591 residues: L-fucose isomerase (591 aa).

Active-site proton acceptor residues include glutamate 338 and aspartate 362. 3 residues coordinate Mn(2+): glutamate 338, aspartate 362, and histidine 529.

Belongs to the L-fucose isomerase family. Mn(2+) is required as a cofactor.

It localises to the cytoplasm. It catalyses the reaction L-fucose = L-fuculose. Its pathway is carbohydrate degradation; L-fucose degradation; L-lactaldehyde and glycerone phosphate from L-fucose: step 1/3. Converts the aldose L-fucose into the corresponding ketose L-fuculose. In Bacteroides thetaiotaomicron (strain ATCC 29148 / DSM 2079 / JCM 5827 / CCUG 10774 / NCTC 10582 / VPI-5482 / E50), this protein is L-fucose isomerase.